A 494-amino-acid polypeptide reads, in one-letter code: Aspartyl/glutamyl-tRNA(Asn/Gln) amidotransferase subunit B (494 aa).

It belongs to the GatB/GatE family. GatB subfamily. In terms of assembly, heterotrimer of A, B and C subunits.

The enzyme catalyses L-glutamyl-tRNA(Gln) + L-glutamine + ATP + H2O = L-glutaminyl-tRNA(Gln) + L-glutamate + ADP + phosphate + H(+). It carries out the reaction L-aspartyl-tRNA(Asn) + L-glutamine + ATP + H2O = L-asparaginyl-tRNA(Asn) + L-glutamate + ADP + phosphate + 2 H(+). Its function is as follows. Allows the formation of correctly charged Asn-tRNA(Asn) or Gln-tRNA(Gln) through the transamidation of misacylated Asp-tRNA(Asn) or Glu-tRNA(Gln) in organisms which lack either or both of asparaginyl-tRNA or glutaminyl-tRNA synthetases. The reaction takes place in the presence of glutamine and ATP through an activated phospho-Asp-tRNA(Asn) or phospho-Glu-tRNA(Gln). In Nitrobacter winogradskyi (strain ATCC 25391 / DSM 10237 / CIP 104748 / NCIMB 11846 / Nb-255), this protein is Aspartyl/glutamyl-tRNA(Asn/Gln) amidotransferase subunit B.